Consider the following 629-residue polypeptide: EF-hand calcium-binding domain-containing protein 7 (629 aa).

The disordered stretch occupies residues 1-25; it reads MAISPRSDATFSSQKSTPSESPRTK. Positions 7-21 are enriched in polar residues; the sequence is SDATFSSQKSTPSES. 2 EF-hand domains span residues 102–137 and 138–173; these read TSKAELLKSFKQLDVNDDGCILHTDLYKFLTKRGEK and MTREEVNAIINLADVNADGKFDYIKFCKLYMTTNEQ. Residues 195-229 are disordered; that stretch reads NHIEGSPERDPSPVPKPSPKITRKTDPETFLNKGD. Phosphoserine is present on residues serine 200 and serine 212. The 36-residue stretch at 403–438 folds into the EF-hand 3 domain; it reads EFKSTLSDIFEVIDLDGNGLLSLEEYNFFELRTSGE. The Ca(2+) site is built by aspartate 416, aspartate 418, asparagine 420, and glutamate 427.

As to quaternary structure, component of the EvC complex composed of EFCAB7, IQCE, EVC2 and EVC; built from two subcomplexes, EVC2:EVC and EFCAB7:IQCE. Interacts (via EF-hand 1 and 2) with IQCE (via N-terminus); this interaction anchors the EVC-EVC2 complex in a signaling microdomain at the base of cilia and stimulates the Hedgehog (Hh) pathway. Interacts with EVC2 (via N-terminal end). Interacts with EVC.

It localises to the cell projection. It is found in the cilium membrane. Functionally, component of the EvC complex that positively regulates ciliary Hedgehog (Hh) signaling. Required for the localization of the EVC2:EVC subcomplex at the base of primary cilia. This is EF-hand calcium-binding domain-containing protein 7 (EFCAB7) from Homo sapiens (Human).